We begin with the raw amino-acid sequence, 417 residues long: C6 finger transcription factor traC (417 aa).

Residues 1 to 40 form a disordered region; the sequence is MNFSEQFTGRSEPGRKANRTSNNNTNSTTNVATVTTDDSN. Over residues 19-37 the composition is skewed to low complexity; it reads RTSNNNTNSTTNVATVTTD. The zn(2)-C6 fungal-type DNA-binding region spans 44–73; sequence CDRCKGQKLRCIWENGSNTCRRCTRARAVC. Disordered regions lie at residues 75 to 94 and 104 to 128; these read QPRPRPFGRPRCSTKSKHHV and WVSSTTQQPQENDAEMPMATSDDHD. The span at 80–94 shows a compositional bias: basic residues; the sequence is PFGRPRCSTKSKHHV. Residues 104–114 are compositionally biased toward polar residues; it reads WVSSTTQQPQE.

The protein resides in the nucleus. In terms of biological role, C6 finger transcription factor; part of the tra gene cluster that produces terrestric acid. The clavatol biosynthesis cluster cla and the terrestric acid cluster tra are both involved in the production of peniphenones and penilactones. This Penicillium crustosum (Blue mold fungus) protein is C6 finger transcription factor traC.